The chain runs to 334 residues: Biotin synthase (334 aa).

A Radical SAM core domain is found at 54–281 (QAIQLSTLLS…KSYVRLSAGR (228 aa)). Residues Cys69, Cys73, and Cys76 each contribute to the [4Fe-4S] cluster site. The [2Fe-2S] cluster site is built by Cys113, Cys144, Cys204, and Arg276.

It belongs to the radical SAM superfamily. Biotin synthase family. As to quaternary structure, homodimer. [4Fe-4S] cluster serves as cofactor. The cofactor is [2Fe-2S] cluster.

The catalysed reaction is (4R,5S)-dethiobiotin + (sulfur carrier)-SH + 2 reduced [2Fe-2S]-[ferredoxin] + 2 S-adenosyl-L-methionine = (sulfur carrier)-H + biotin + 2 5'-deoxyadenosine + 2 L-methionine + 2 oxidized [2Fe-2S]-[ferredoxin]. Its pathway is cofactor biosynthesis; biotin biosynthesis; biotin from 7,8-diaminononanoate: step 2/2. Catalyzes the conversion of dethiobiotin (DTB) to biotin by the insertion of a sulfur atom into dethiobiotin via a radical-based mechanism. This is Biotin synthase from Haemophilus ducreyi (strain 35000HP / ATCC 700724).